The chain runs to 205 residues: Urease accessory protein UreG (205 aa).

10-17 (GPVGAGKT) contributes to the GTP binding site.

It belongs to the SIMIBI class G3E GTPase family. UreG subfamily. In terms of assembly, homodimer. UreD, UreF and UreG form a complex that acts as a GTP-hydrolysis-dependent molecular chaperone, activating the urease apoprotein by helping to assemble the nickel containing metallocenter of UreC. The UreE protein probably delivers the nickel.

It localises to the cytoplasm. Facilitates the functional incorporation of the urease nickel metallocenter. This process requires GTP hydrolysis, probably effectuated by UreG. This Corynebacterium glutamicum (strain R) protein is Urease accessory protein UreG.